Here is a 249-residue protein sequence, read N- to C-terminus: DNA polymerase sliding clamp (249 aa).

Belongs to the PCNA family. Homotrimer. The subunits circularize to form a toroid; DNA passes through its center. Replication factor C (RFC) is required to load the toroid on the DNA.

Sliding clamp subunit that acts as a moving platform for DNA processing. Responsible for tethering the catalytic subunit of DNA polymerase and other proteins to DNA during high-speed replication. The sequence is that of DNA polymerase sliding clamp from Thermococcus gammatolerans (strain DSM 15229 / JCM 11827 / EJ3).